Here is a 225-residue protein sequence, read N- to C-terminus: 7-cyano-7-deazaguanine synthase (225 aa).

8–18 provides a ligand contact to ATP; that stretch reads VSGGADSATVL. 4 residues coordinate Zn(2+): Cys188, Cys198, Cys201, and Cys204.

It belongs to the QueC family. Zn(2+) serves as cofactor.

It catalyses the reaction 7-carboxy-7-deazaguanine + NH4(+) + ATP = 7-cyano-7-deazaguanine + ADP + phosphate + H2O + H(+). It participates in purine metabolism; 7-cyano-7-deazaguanine biosynthesis. Its function is as follows. Catalyzes the ATP-dependent conversion of 7-carboxy-7-deazaguanine (CDG) to 7-cyano-7-deazaguanine (preQ(0)). The protein is 7-cyano-7-deazaguanine synthase of Rickettsia bellii (strain OSU 85-389).